Consider the following 103-residue polypeptide: Small ribosomal subunit protein bS6c (103 aa).

This sequence belongs to the bacterial ribosomal protein bS6 family.

It localises to the plastid. Its subcellular location is the chloroplast. Functionally, binds together with bS18 to 16S ribosomal RNA. This is Small ribosomal subunit protein bS6c from Thalassiosira pseudonana (Marine diatom).